Reading from the N-terminus, the 358-residue chain is Dual-specificity RNA methyltransferase RlmN (358 aa).

Residue E91 is the Proton acceptor of the active site. One can recognise a Radical SAM core domain in the interval 98-335 (SQGRITQCLS…AIIRKSKGAD (238 aa)). Cysteines 105 and 340 form a disulfide. [4Fe-4S] cluster contacts are provided by C112, C116, and C119. S-adenosyl-L-methionine-binding positions include 164–165 (GE), S196, 219–221 (SLH), and N295. The S-methylcysteine intermediate role is filled by C340.

The protein belongs to the radical SAM superfamily. RlmN family. It depends on [4Fe-4S] cluster as a cofactor.

The protein resides in the cytoplasm. It catalyses the reaction adenosine(2503) in 23S rRNA + 2 reduced [2Fe-2S]-[ferredoxin] + 2 S-adenosyl-L-methionine = 2-methyladenosine(2503) in 23S rRNA + 5'-deoxyadenosine + L-methionine + 2 oxidized [2Fe-2S]-[ferredoxin] + S-adenosyl-L-homocysteine. It carries out the reaction adenosine(37) in tRNA + 2 reduced [2Fe-2S]-[ferredoxin] + 2 S-adenosyl-L-methionine = 2-methyladenosine(37) in tRNA + 5'-deoxyadenosine + L-methionine + 2 oxidized [2Fe-2S]-[ferredoxin] + S-adenosyl-L-homocysteine. Functionally, specifically methylates position 2 of adenine 2503 in 23S rRNA and position 2 of adenine 37 in tRNAs. m2A2503 modification seems to play a crucial role in the proofreading step occurring at the peptidyl transferase center and thus would serve to optimize ribosomal fidelity. The polypeptide is Dual-specificity RNA methyltransferase RlmN (Oleidesulfovibrio alaskensis (strain ATCC BAA-1058 / DSM 17464 / G20) (Desulfovibrio alaskensis)).